The primary structure comprises 369 residues: Histidine decarboxylase (369 aa).

Histidine 119 is a binding site for substrate. Residue lysine 230 is modified to N6-(pyridoxal phosphate)lysine.

The protein belongs to the group II decarboxylase family. As to quaternary structure, homotetramer. Pyridoxal 5'-phosphate serves as cofactor.

The catalysed reaction is L-histidine + H(+) = histamine + CO2. The sequence is that of Histidine decarboxylase from Mesorhizobium japonicum (strain LMG 29417 / CECT 9101 / MAFF 303099) (Mesorhizobium loti (strain MAFF 303099)).